The chain runs to 345 residues: Aspartate--ammonia ligase (345 aa).

This sequence belongs to the class-II aminoacyl-tRNA synthetase family. AsnA subfamily.

It is found in the cytoplasm. It catalyses the reaction L-aspartate + NH4(+) + ATP = L-asparagine + AMP + diphosphate + H(+). It participates in amino-acid biosynthesis; L-asparagine biosynthesis; L-asparagine from L-aspartate (ammonia route): step 1/1. The polypeptide is Aspartate--ammonia ligase (Parabacteroides distasonis (strain ATCC 8503 / DSM 20701 / CIP 104284 / JCM 5825 / NCTC 11152)).